The chain runs to 130 residues: NADH-ubiquinone oxidoreductase chain 1 (130 aa).

A helical membrane pass occupies residues 45 to 65; that stretch reads SILFMSLFSVMFCLVVYSYLW.

This sequence belongs to the complex I subunit 1 family.

The protein resides in the mitochondrion inner membrane. The enzyme catalyses a ubiquinone + NADH + 5 H(+)(in) = a ubiquinol + NAD(+) + 4 H(+)(out). In terms of biological role, core subunit of the mitochondrial membrane respiratory chain NADH dehydrogenase (Complex I) that is believed to belong to the minimal assembly required for catalysis. Complex I functions in the transfer of electrons from NADH to the respiratory chain. The immediate electron acceptor for the enzyme is believed to be ubiquinone. The sequence is that of NADH-ubiquinone oxidoreductase chain 1 (ND1) from Artemia salina (Brine shrimp).